Reading from the N-terminus, the 387-residue chain is Putative ribosomal RNA large subunit methyltransferase MJ1649 (387 aa).

The PUA domain maps to 5 to 81; the sequence is LIKLEIDRRA…EEIDYDFFYK (77 aa).

Belongs to the methyltransferase superfamily. RlmI family.

It is found in the cytoplasm. The protein is Putative ribosomal RNA large subunit methyltransferase MJ1649 of Methanocaldococcus jannaschii (strain ATCC 43067 / DSM 2661 / JAL-1 / JCM 10045 / NBRC 100440) (Methanococcus jannaschii).